Consider the following 689-residue polypeptide: Small ribosomal subunit protein mS39 (689 aa).

Residues 1-37 (MAVVSAVRWLGLRSRLGQPLTGRRAGLCEQARSCRFY) constitute a mitochondrion transit peptide. Residue K126 is modified to N6-acetyllysine. 10 PPR repeats span residues 149-183 (IKDI…GTTV), 184-219 (SLET…EALE), 255-289 (NEHS…RLHA), 290-330 (DVYT…KVKP), 331-367 (NLQT…GIEP), 368-409 (SLAT…SPKD), 412-446 (DDKF…DNWK), 454-488 (RNFY…AYFP), 489-523 (HSQT…GHTF), and 572-606 (PATS…NKIP). The tract at residues 665 to 689 (NLTALTSDSDTDSSSDSDSDTSEGK) is disordered. Acidic residues predominate over residues 673-689 (SDTDSSSDSDSDTSEGK).

Belongs to the mitochondrion-specific ribosomal protein mS39 family. In terms of assembly, component of the mitochondrial small ribosomal subunit (mt-SSU). Mature mammalian 55S mitochondrial ribosomes consist of a small (28S) and a large (39S) subunit. The 28S small subunit contains a 12S ribosomal RNA (12S mt-rRNA) and 30 different proteins. The 39S large subunit contains a 16S rRNA (16S mt-rRNA), a copy of mitochondrial valine transfer RNA (mt-tRNA(Val)), which plays an integral structural role, and 52 different proteins. Associated with the 12S mitochondrial rRNA (12S mt-rRNA). As to expression, abundant in testes, skeletal muscle and heart tissue.

Its subcellular location is the mitochondrion. Mitochondrial RNA-binding protein that has a role in mitochondrial translation. This Homo sapiens (Human) protein is Small ribosomal subunit protein mS39 (PTCD3).